The following is a 187-amino-acid chain: UPF0301 protein KPK_0728 (187 aa).

This sequence belongs to the UPF0301 (AlgH) family.

This is UPF0301 protein KPK_0728 from Klebsiella pneumoniae (strain 342).